The chain runs to 766 residues: Protein zer-1 homolog (766 aa).

N-acetylalanine is present on Ala2. 3 LRR repeats span residues 226 to 245, 246 to 268, and 278 to 302; these read SLVLYNMDLSDDHIRVIVQL, HKLRHLDISRDRLSSYYKFKLTR, and LGNLMSLDISGHMILENCSISKMEE. ARM repeat units follow at residues 427–467, 511–556, 558–600, 602–643, and 714–756; these read RSEQ…NFSI, DNDH…NITD, TPDN…NVAE, KELR…HIMF, and PDKY…HCSN.

It belongs to the zyg-11 family. As to quaternary structure, interacts with the ELOC-ELOB/Elongin BC complex. Part of an E3 ubiquitin ligase complex including ZER1, CUL2 and Elongin BC. Expressed in testis, spermatocytes and spermatids (at protein level). Expressed in spermatocytes, spermatids, prostate, skeletal muscle, ovary, small intestine, heart, brain and pancreas.

In terms of biological role, serves as substrate adapter subunit in the E3 ubiquitin ligase complex ZYG11B-CUL2-Elongin BC. Acts to target substrates bearing N-terminal degrons for proteasomal degradation with the first four residues of substrates being the key recognition elements. Involved in the clearance of proteolytic fragments generated by caspase cleavage during apoptosis since N-terminal glycine degrons are strongly enriched at caspase cleavage sites. Also important in the quality control of protein N-myristoylation in which N-terminal glycine degrons are conditionally exposed after a failure of N-myristoylation. This is Protein zer-1 homolog from Homo sapiens (Human).